We begin with the raw amino-acid sequence, 121 residues long: MARIAGIDIPREKRVEIALTYIYGVGLTRSKLILSNTGVNPDIRVKDLSDSDVQKLRGATEDFTVEGDLRRKEGMAMKRLQDIGCVRGRRHRMSLPVRGQRTRTNARTRRGSRKTVAGRKK.

Residues 89 to 121 form a disordered region; that stretch reads RRHRMSLPVRGQRTRTNARTRRGSRKTVAGRKK. Residues 100–121 show a composition bias toward basic residues; the sequence is QRTRTNARTRRGSRKTVAGRKK.

It belongs to the universal ribosomal protein uS13 family. Part of the 30S ribosomal subunit. Forms a loose heterodimer with protein S19. Forms two bridges to the 50S subunit in the 70S ribosome.

Its function is as follows. Located at the top of the head of the 30S subunit, it contacts several helices of the 16S rRNA. In the 70S ribosome it contacts the 23S rRNA (bridge B1a) and protein L5 of the 50S subunit (bridge B1b), connecting the 2 subunits; these bridges are implicated in subunit movement. Contacts the tRNAs in the A and P-sites. The polypeptide is Small ribosomal subunit protein uS13 (Prochlorococcus marinus subsp. pastoris (strain CCMP1986 / NIES-2087 / MED4)).